The following is a 720-amino-acid chain: Ornithine decarboxylase (720 aa).

At K354 the chain carries N6-(pyridoxal phosphate)lysine.

Belongs to the Orn/Lys/Arg decarboxylase class-I family. The cofactor is pyridoxal 5'-phosphate.

The enzyme catalyses L-ornithine + H(+) = putrescine + CO2. This is Ornithine decarboxylase (speF) from Haemophilus influenzae (strain ATCC 51907 / DSM 11121 / KW20 / Rd).